A 269-amino-acid polypeptide reads, in one-letter code: Formamidopyrimidine-DNA glycosylase (269 aa).

The active-site Schiff-base intermediate with DNA is P2. E3 functions as the Proton donor in the catalytic mechanism. K57 (proton donor; for beta-elimination activity) is an active-site residue. Residues H90, R109, and K150 each contribute to the DNA site. An FPG-type zinc finger spans residues 235–269 (QVYGRKGEPCRVCGTPIVATKHAQRATFYCRQCQK). R259 acts as the Proton donor; for delta-elimination activity in catalysis.

This sequence belongs to the FPG family. In terms of assembly, monomer. Zn(2+) is required as a cofactor.

The catalysed reaction is Hydrolysis of DNA containing ring-opened 7-methylguanine residues, releasing 2,6-diamino-4-hydroxy-5-(N-methyl)formamidopyrimidine.. It carries out the reaction 2'-deoxyribonucleotide-(2'-deoxyribose 5'-phosphate)-2'-deoxyribonucleotide-DNA = a 3'-end 2'-deoxyribonucleotide-(2,3-dehydro-2,3-deoxyribose 5'-phosphate)-DNA + a 5'-end 5'-phospho-2'-deoxyribonucleoside-DNA + H(+). In terms of biological role, involved in base excision repair of DNA damaged by oxidation or by mutagenic agents. Acts as a DNA glycosylase that recognizes and removes damaged bases. Has a preference for oxidized purines, such as 7,8-dihydro-8-oxoguanine (8-oxoG). Has AP (apurinic/apyrimidinic) lyase activity and introduces nicks in the DNA strand. Cleaves the DNA backbone by beta-delta elimination to generate a single-strand break at the site of the removed base with both 3'- and 5'-phosphates. The protein is Formamidopyrimidine-DNA glycosylase of Escherichia coli O7:K1 (strain IAI39 / ExPEC).